A 1061-amino-acid chain; its full sequence is Ribonuclease E (1061 aa).

The S1 motif domain maps to Ala39–Phe119. Positions Phe57–Lys112 are interaction with RNA. Residues Arg169–Thr170 form an interaction with RNA 5'-terminal monophosphate region. Residues Asp303 and Asp346 each coordinate Mg(2+). Positions 404 and 407 each coordinate Zn(2+). A required for zinc-mediated homotetramerization and catalytic activity region spans residues Cys404–Cys407. Disordered regions lie at residues Phe532 to Pro565, Glu586 to Tyr731, and Glu752 to Thr822. Over residues Asp536 to Pro546 the composition is skewed to pro residues. The span at Ala547 to Pro565 shows a compositional bias: low complexity. Composition is skewed to basic and acidic residues over residues Ala598 to Arg608, Asn615 to Arg640, and Glu652 to Ala690. Residues Arg796–Arg814 show a composition bias toward basic residues. An interaction with enolase region spans residues Ala833–Arg850. The interaction with PNPase stretch occupies residues Glu1021–Glu1061. Positions Pro1031 to Glu1061 are disordered. The segment covering Gly1043–Ala1055 has biased composition (low complexity).

It belongs to the RNase E/G family. RNase E subfamily. As to quaternary structure, component of the RNA degradosome, which is a multiprotein complex involved in RNA processing and mRNA degradation. Within the RNA degradosome, RNase E assembles into a homotetramer formed by a dimer of dimers. Tetramerization is essential for catalytic activity, but not for RNA-binding. Interacts with RhlB, PNPase (pnp) and enolase (eno). Interacts with DeaD at reduced temperature. Requires Zn(2+) as cofactor. Mg(2+) is required as a cofactor.

The protein localises to the cytoplasm. Its subcellular location is the cell inner membrane. The catalysed reaction is Endonucleolytic cleavage of single-stranded RNA in A- and U-rich regions.. With respect to regulation, the presence of a 5'-monophosphate on substrate RNA accelerates its cleavage by catalytically activating the enzyme. Binding to the membrane stabilizes protein structure and increases affinity for the substrate. In terms of biological role, endoribonuclease that plays a central role in RNA processing and decay. Required for the maturation of 5S and 16S rRNAs and the majority of tRNAs. Also involved in the degradation of most mRNAs. Can also process other RNA species, such as RNAI, a molecule that controls the replication of ColE1 plasmid, and the cell division inhibitor DicF-RNA. It initiates the decay of RNAs by cutting them internally near their 5'-end. It is able to remove poly(A) tails by an endonucleolytic process. Required to initiate rRNA degradation during both starvation and quality control; acts after RNase PH (rph) exonucleolytically digests the 3'-end of the 16S rRNA. Degradation of 16S rRNA leads to 23S rRNA degradation. Processes the 3 tRNA(Pro) precursors immediately after the 3'-CCA to generate the mature ends. Prefers 5'-monophosphorylated substrates over 5'-triphosphorylated substrates. 5'-monophosphate-assisted cleavage requires at least 2 and preferably 3 or more unpaired 5'-terminal nucleotides. The optimal spacing between the 5' end and the scissile phosphate appears to be 8 nucleotides. Any sequence of unpaired nucleotides at the 5'-end is tolerated. In Escherichia coli (strain K12), this protein is Ribonuclease E.